The sequence spans 71 residues: Small ribosomal subunit protein bS21 (71 aa).

The disordered stretch occupies residues 37-71; it reads HYEKPTAERKRKKAAAVKRHMKKLSRDNARRVKLY. A compositionally biased stretch (basic residues) spans 45 to 59; the sequence is RKRKKAAAVKRHMKK. Over residues 60–71 the composition is skewed to basic and acidic residues; that stretch reads LSRDNARRVKLY.

This sequence belongs to the bacterial ribosomal protein bS21 family.

The protein is Small ribosomal subunit protein bS21 of Pseudoalteromonas translucida (strain TAC 125).